The primary structure comprises 116 residues: Flagellar transcriptional regulator FlhD (116 aa).

This sequence belongs to the FlhD family. Homodimer; disulfide-linked. Forms a heterohexamer composed of two FlhC and four FlhD subunits. Each FlhC binds a FlhD dimer, forming a heterotrimer, and a hexamer assembles by dimerization of two heterotrimers.

Its subcellular location is the cytoplasm. Functionally, functions in complex with FlhC as a master transcriptional regulator that regulates transcription of several flagellar and non-flagellar operons by binding to their promoter region. Activates expression of class 2 flagellar genes, including fliA, which is a flagellum-specific sigma factor that turns on the class 3 genes. Also regulates genes whose products function in a variety of physiological pathways. The chain is Flagellar transcriptional regulator FlhD from Xenorhabdus nematophila (Achromobacter nematophilus).